The primary structure comprises 118 residues: Holo-[acyl-carrier-protein] synthase (118 aa).

The Mg(2+) site is built by Asp-9 and Glu-52.

It belongs to the P-Pant transferase superfamily. AcpS family. Mg(2+) serves as cofactor.

It localises to the cytoplasm. It catalyses the reaction apo-[ACP] + CoA = holo-[ACP] + adenosine 3',5'-bisphosphate + H(+). Functionally, transfers the 4'-phosphopantetheine moiety from coenzyme A to a Ser of acyl-carrier-protein. This chain is Holo-[acyl-carrier-protein] synthase, found in Frankia casuarinae (strain DSM 45818 / CECT 9043 / HFP020203 / CcI3).